The sequence spans 202 residues: Protein FAR-RED ELONGATED HYPOCOTYL 1 (202 aa).

Position 39 is a phosphoserine (serine 39). The short motif at lysine 40 to lysine 43 is the Nuclear localization sequence (NLS) element. A Nuclear export sequence (NES) motif is present at residues leucine 54–leucine 57. Threonine 61 is subject to Phosphothreonine.

Belongs to the FHY1 protein family. In terms of assembly, homodimer and heterodimer with FHL. Interacts with underphosphorylated PHYA, especially upon far-red (FR) light illumination. Binds to LAF1 and HFR1. Forms PHYA/FHY1/HFR1 complex in darkness but dissociates from PHYA and HFR1 in response to continuous FR light (FRc). In terms of processing, inactivated by rapid reversible PHYA-mediated phosphorylation at Ser-39 and Thr-61 in red light (R), thus inhibiting PHYA signaling in a negative feedback loop; this ensures the seedling deetiolation process in response to a R-enriched light condition. Subsequent exposure to far-red light (FR) after the R conditions leads to dephosphorylation. The phosphorylated form is cytoplasmic only and unable to bind to chromatin at direct target genes whereas the unphosphorylated form can shuttle from cytoplasm to nucleus. As to expression, expressed in hypocotyl cells of etiolated plants.

The protein localises to the nucleus. Its subcellular location is the cytoplasm. Functionally, key regulator of far red / red (FR/R) spectrum-specific responses essential for the adaption to changing light conditions (e.g. de-etiolation), essentially by regulating PHYA shuttling from the cytoplasm to the nucleus and by directly regulating the expression of some target genes, depending on light conditions and phosphorylation status. Binds chromatin at target genes promoters, especially in FR light conditions. Can activate transcription of different genes, some being in a phytochrome A (PHYA)-dependent and other in a PHYA-independent manners. Controls specific aspects of plant development, such as the inhibition of seed germination under FR during salt stress. Essential for light-regulated PHYA nuclear accumulation and subsequent PHYA phototropic signaling processes involved in photomorphogenesis. Mediates the association of PHYA with HFR1 and LAF1 in the nucleus in response to FR conditions. PHYA-specific signal transducer in response to continuous FR lights. Contributes to inhibition of hypocotyl elongation in continuous blue light (B). The sequence is that of Protein FAR-RED ELONGATED HYPOCOTYL 1 from Arabidopsis thaliana (Mouse-ear cress).